The sequence spans 364 residues: TD and POZ domain-containing protein 2 (364 aa).

The region spanning E19–V149 is the MATH domain. The 68-residue stretch at T188–H255 folds into the BTB domain.

It belongs to the Tdpoz family.

The protein is TD and POZ domain-containing protein 2 of Mus musculus (Mouse).